The sequence spans 169 residues: Crossover junction endodeoxyribonuclease RuvC (169 aa).

Residues aspartate 11, glutamate 71, and histidine 143 contribute to the active site. Aspartate 11, glutamate 71, and histidine 143 together coordinate Mg(2+).

Belongs to the RuvC family. Homodimer which binds Holliday junction (HJ) DNA. The HJ becomes 2-fold symmetrical on binding to RuvC with unstacked arms; it has a different conformation from HJ DNA in complex with RuvA. In the full resolvosome a probable DNA-RuvA(4)-RuvB(12)-RuvC(2) complex forms which resolves the HJ. Mg(2+) is required as a cofactor.

It localises to the cytoplasm. It carries out the reaction Endonucleolytic cleavage at a junction such as a reciprocal single-stranded crossover between two homologous DNA duplexes (Holliday junction).. In terms of biological role, the RuvA-RuvB-RuvC complex processes Holliday junction (HJ) DNA during genetic recombination and DNA repair. Endonuclease that resolves HJ intermediates. Cleaves cruciform DNA by making single-stranded nicks across the HJ at symmetrical positions within the homologous arms, yielding a 5'-phosphate and a 3'-hydroxyl group; requires a central core of homology in the junction. The consensus cleavage sequence is 5'-(A/T)TT(C/G)-3'. Cleavage occurs on the 3'-side of the TT dinucleotide at the point of strand exchange. HJ branch migration catalyzed by RuvA-RuvB allows RuvC to scan DNA until it finds its consensus sequence, where it cleaves and resolves the cruciform DNA. In Mesorhizobium japonicum (strain LMG 29417 / CECT 9101 / MAFF 303099) (Mesorhizobium loti (strain MAFF 303099)), this protein is Crossover junction endodeoxyribonuclease RuvC.